We begin with the raw amino-acid sequence, 163 residues long: Ribosome maturation factor RimM (163 aa).

The PRC barrel domain occupies 90–155 (VGEYYCKDLV…ADIDLNKKRL (66 aa)).

The protein belongs to the RimM family. In terms of assembly, binds ribosomal protein uS19.

It is found in the cytoplasm. An accessory protein needed during the final step in the assembly of 30S ribosomal subunit, possibly for assembly of the head region. Essential for efficient processing of 16S rRNA. May be needed both before and after RbfA during the maturation of 16S rRNA. It has affinity for free ribosomal 30S subunits but not for 70S ribosomes. This is Ribosome maturation factor RimM from Neorickettsia sennetsu (strain ATCC VR-367 / Miyayama) (Ehrlichia sennetsu).